A 206-amino-acid polypeptide reads, in one-letter code: LexA repressor (206 aa).

The segment at residues 27–47 (YEEIRQNLGFRSLNAVFKHLK) is a DNA-binding region (H-T-H motif). Active-site for autocatalytic cleavage activity residues include Ser-120 and Lys-157.

This sequence belongs to the peptidase S24 family. In terms of assembly, homodimer.

It carries out the reaction Hydrolysis of Ala-|-Gly bond in repressor LexA.. In terms of biological role, represses a number of genes involved in the response to DNA damage (SOS response), including recA and lexA. In the presence of single-stranded DNA, RecA interacts with LexA causing an autocatalytic cleavage which disrupts the DNA-binding part of LexA, leading to derepression of the SOS regulon and eventually DNA repair. The chain is LexA repressor from Syntrophobacter fumaroxidans (strain DSM 10017 / MPOB).